Consider the following 171-residue polypeptide: Ribosome maturation factor RimM (171 aa).

Residues 98–170 form the PRC barrel domain; the sequence is EGEFYLHQII…AVQVSVPEGL (73 aa).

This sequence belongs to the RimM family. Binds ribosomal protein uS19.

It localises to the cytoplasm. Functionally, an accessory protein needed during the final step in the assembly of 30S ribosomal subunit, possibly for assembly of the head region. Essential for efficient processing of 16S rRNA. May be needed both before and after RbfA during the maturation of 16S rRNA. It has affinity for free ribosomal 30S subunits but not for 70S ribosomes. This Pediococcus pentosaceus (strain ATCC 25745 / CCUG 21536 / LMG 10740 / 183-1w) protein is Ribosome maturation factor RimM.